A 156-amino-acid chain; its full sequence is Small ribosomal subunit protein uS7 (156 aa).

This sequence belongs to the universal ribosomal protein uS7 family. Part of the 30S ribosomal subunit. Contacts proteins S9 and S11.

One of the primary rRNA binding proteins, it binds directly to 16S rRNA where it nucleates assembly of the head domain of the 30S subunit. Is located at the subunit interface close to the decoding center, probably blocks exit of the E-site tRNA. The polypeptide is Small ribosomal subunit protein uS7 (Dehalococcoides mccartyi (strain ATCC BAA-2266 / KCTC 15142 / 195) (Dehalococcoides ethenogenes (strain 195))).